Reading from the N-terminus, the 194-residue chain is Mitochondrial import inner membrane translocase subunit Tim22 (194 aa).

2 disulfide bridges follow: Cys69-Cys141 and Cys160-Cys179. The next 3 helical transmembrane spans lie at 74-94 (ALAC…TAGI), 123-143 (MSYA…ECLI), and 170-190 (AGLK…AAID).

It belongs to the Tim17/Tim22/Tim23 family. As to quaternary structure, component of the TIM22 complex, whose core is composed of TIMM22, associated with peripheral protein FXC1/TIMM10B and the 70 kDa heterohexamer. In most cases, the 70 kDa complex is composed of TIMM9 and TIMM10 (TIMM10A or TIMM10B). A small fraction of the 70 kDa complex is composed of TIMM8 (TIMM8A/DDP1 or TIMM8B/DDP2) and TIMM13. The TIM22 complex also contains AGK and TIMM29. Interacts directly with TIMM9, TIMM10A and FXC1/TIMM10B. Interacts (when oxidized) with TIMM29; interaction is direct. Post-translationally, disulfide bonds promote efficient assembly of the TIM22 complex.

It localises to the mitochondrion inner membrane. In terms of biological role, essential core component of the TIM22 complex, a complex that mediates the import and insertion of multi-pass transmembrane proteins into the mitochondrial inner membrane. In the TIM22 complex, it constitutes the voltage-activated and signal-gated channel. Forms a twin-pore translocase that uses the membrane potential as external driving force in 2 voltage-dependent steps. This is Mitochondrial import inner membrane translocase subunit Tim22 (TIMM22) from Homo sapiens (Human).